A 246-amino-acid polypeptide reads, in one-letter code: ATP synthase subunit a, chloroplastic (246 aa).

4 helical membrane passes run Gly-35–Gly-55, Val-94–Ile-114, Ile-133–Ser-153, and Val-202–Ala-222.

This sequence belongs to the ATPase A chain family. F-type ATPases have 2 components, CF(1) - the catalytic core - and CF(0) - the membrane proton channel. CF(1) has five subunits: alpha(3), beta(3), gamma(1), delta(1), epsilon(1). CF(0) has four main subunits: a, b, b' and c.

It localises to the plastid. Its subcellular location is the chloroplast thylakoid membrane. Functionally, key component of the proton channel; it plays a direct role in the translocation of protons across the membrane. This is ATP synthase subunit a, chloroplastic from Rhodomonas salina (Cryptomonas salina).